The primary structure comprises 488 residues: Probable indole-3-acetic acid-amido synthetase GH3.6 (488 aa).

The protein belongs to the IAA-amido conjugating enzyme family. Expressed in roots and callus.

Functionally, may catalyze the synthesis of indole-3-acetic acid (IAA)-amino acid conjugates, providing a mechanism for the plant to cope with the presence of excess auxin. The sequence is that of Probable indole-3-acetic acid-amido synthetase GH3.6 (GH3.6) from Oryza sativa subsp. japonica (Rice).